Here is a 169-residue protein sequence, read N- to C-terminus: Ribosome maturation factor RimM (169 aa).

One can recognise a PRC barrel domain in the interval 93 to 167 (PENSFFISDI…KISVILPKGL (75 aa)).

Belongs to the RimM family. As to quaternary structure, binds ribosomal protein uS19.

It localises to the cytoplasm. In terms of biological role, an accessory protein needed during the final step in the assembly of 30S ribosomal subunit, possibly for assembly of the head region. Essential for efficient processing of 16S rRNA. May be needed both before and after RbfA during the maturation of 16S rRNA. It has affinity for free ribosomal 30S subunits but not for 70S ribosomes. The protein is Ribosome maturation factor RimM of Ruminiclostridium cellulolyticum (strain ATCC 35319 / DSM 5812 / JCM 6584 / H10) (Clostridium cellulolyticum).